Consider the following 352-residue polypeptide: Phospho-N-acetylmuramoyl-pentapeptide-transferase (352 aa).

Transmembrane regions (helical) follow at residues 16–36, 66–86, 88–108, 129–149, 160–180, 191–211, 228–248, 255–275, 280–300, and 329–349; these read YITF…LLFM, TPTM…LLCA, LNNL…LIGL, MLYL…FGME, PLLS…VATS, GLAT…VYIA, SGEA…FLWF, LFMG…MAII, FLLF…ILQI, and KIIV…LLTL.

This sequence belongs to the glycosyltransferase 4 family. MraY subfamily. Mg(2+) serves as cofactor.

It localises to the cell inner membrane. The catalysed reaction is UDP-N-acetyl-alpha-D-muramoyl-L-alanyl-gamma-D-glutamyl-meso-2,6-diaminopimeloyl-D-alanyl-D-alanine + di-trans,octa-cis-undecaprenyl phosphate = di-trans,octa-cis-undecaprenyl diphospho-N-acetyl-alpha-D-muramoyl-L-alanyl-D-glutamyl-meso-2,6-diaminopimeloyl-D-alanyl-D-alanine + UMP. It functions in the pathway cell wall biogenesis; peptidoglycan biosynthesis. In terms of biological role, catalyzes the initial step of the lipid cycle reactions in the biosynthesis of the cell wall peptidoglycan: transfers peptidoglycan precursor phospho-MurNAc-pentapeptide from UDP-MurNAc-pentapeptide onto the lipid carrier undecaprenyl phosphate, yielding undecaprenyl-pyrophosphoryl-MurNAc-pentapeptide, known as lipid I. This Wolinella succinogenes (strain ATCC 29543 / DSM 1740 / CCUG 13145 / JCM 31913 / LMG 7466 / NCTC 11488 / FDC 602W) (Vibrio succinogenes) protein is Phospho-N-acetylmuramoyl-pentapeptide-transferase.